The sequence spans 211 residues: Dual specificity protein phosphatase 26 (211 aa).

Positions asparagine 60–glutamine 207 constitute a Tyrosine-protein phosphatase domain. Cysteine 152 acts as the Phosphocysteine intermediate in catalysis.

This sequence belongs to the protein-tyrosine phosphatase family. Non-receptor class dual specificity subfamily. Interacts with HSF4. Brain. In the brain it is expressed ubiquitously except in the hippocampus. Expressed in embryonal cancers (retinoblastoma, neuroepithilioma and neuroblastoma) and in anaplatic thyroid cancer.

Its subcellular location is the cytoplasm. It localises to the nucleus. The protein localises to the golgi apparatus. The enzyme catalyses O-phospho-L-tyrosyl-[protein] + H2O = L-tyrosyl-[protein] + phosphate. It carries out the reaction O-phospho-L-seryl-[protein] + H2O = L-seryl-[protein] + phosphate. The catalysed reaction is O-phospho-L-threonyl-[protein] + H2O = L-threonyl-[protein] + phosphate. Functionally, inactivates MAPK1 and MAPK3 which leads to dephosphorylation of heat shock factor protein 4 and a reduction in its DNA-binding activity. Inhibits MAP kinase p38 by dephosphorylating it and inhibits p38-mediated apoptosis in anaplastic thyroid cancer cells. Can also induce activation of MAP kinase p38 and c-Jun N-terminal kinase (JNK). The sequence is that of Dual specificity protein phosphatase 26 (DUSP26) from Homo sapiens (Human).